Consider the following 614-residue polypeptide: DNA double-strand break repair protein Mre11 (614 aa).

Mn(2+) is bound by residues Asp-12, His-14, Asp-53, and Asn-88. The active-site Proton donor is His-89. Residues His-158, Asp-189, and His-191 each contribute to the Mn(2+) site. 2 disordered regions span residues 393–434 (ASPI…SPDI) and 487–614 (ALKK…GDYL). The span at 411–425 (PVSSADSVSAVSPES) shows a compositional bias: low complexity. 3 stretches are compositionally biased toward basic and acidic residues: residues 487–502 (ALKK…REAP), 535–558 (VPEK…KETG), and 568–591 (GSEK…EKPV).

It belongs to the MRE11/RAD32 family. As to quaternary structure, homodimer. Forms a heterotetramer composed of two Mre11 subunits and two Rad50 subunits. It depends on Mn(2+) as a cofactor.

With respect to regulation, nuclease activity is regulated by Rad50. Part of the Rad50/Mre11 complex, which is involved in the early steps of DNA double-strand break (DSB) repair. The complex may facilitate opening of the processed DNA ends to aid in the recruitment of HerA and NurA. Mre11 binds to DSB ends and has both double-stranded 3'-5' exonuclease activity and single-stranded endonuclease activity. The protein is DNA double-strand break repair protein Mre11 of Methanosarcina acetivorans (strain ATCC 35395 / DSM 2834 / JCM 12185 / C2A).